Reading from the N-terminus, the 452-residue chain is Probable splicing factor, arginine/serine-rich 7 (452 aa).

2 consecutive RRM domains span residues 10–91 and 163–240; these read KILH…YPNP and RTVY…HSRV. The segment at 258–452 is disordered; the sequence is EEAIRMGRNG…GNGDVVMASE (195 aa). Residues 259–272 are compositionally biased toward basic and acidic residues; it reads EAIRMGRNGDDRDR. The span at 273–290 shows a compositional bias: basic residues; the sequence is RRSRSPRRRRSPSPRRRR. The span at 291–305 shows a compositional bias: basic and acidic residues; it reads DSRDRDRDRDRDRRR. Composition is skewed to basic residues over residues 323–335, 345–360, and 370–382; these read KRSR…RRSR, KRSR…KSRD, and SKDR…RSRS. The segment covering 383-421 has biased composition (basic and acidic residues); it reads RSPEKRRDKEDRKTEKKENENESSLREKLLEKKAARKDS.

Belongs to the splicing factor SR family. In terms of processing, extensively phosphorylated on serine residues in the RS domain.

It is found in the nucleus. This is Probable splicing factor, arginine/serine-rich 7 (rsp-7) from Caenorhabditis elegans.